Reading from the N-terminus, the 422-residue chain is UDP-N-acetylglucosamine 1-carboxyvinyltransferase (422 aa).

22–23 is a phosphoenolpyruvate binding site; the sequence is KN. A UDP-N-acetyl-alpha-D-glucosamine-binding site is contributed by Arg-93. Catalysis depends on Cys-117, which acts as the Proton donor. Cys-117 carries the post-translational modification 2-(S-cysteinyl)pyruvic acid O-phosphothioketal. Residues 122–126, Asp-308, and Leu-330 each bind UDP-N-acetyl-alpha-D-glucosamine; that span reads RPVDL.

The protein belongs to the EPSP synthase family. MurA subfamily.

The protein resides in the cytoplasm. It catalyses the reaction phosphoenolpyruvate + UDP-N-acetyl-alpha-D-glucosamine = UDP-N-acetyl-3-O-(1-carboxyvinyl)-alpha-D-glucosamine + phosphate. Its pathway is cell wall biogenesis; peptidoglycan biosynthesis. Functionally, cell wall formation. Adds enolpyruvyl to UDP-N-acetylglucosamine. This Helicobacter pylori (strain Shi470) protein is UDP-N-acetylglucosamine 1-carboxyvinyltransferase.